A 147-amino-acid chain; its full sequence is UPF0306 protein YhbP (147 aa).

It belongs to the UPF0306 family.

The polypeptide is UPF0306 protein YhbP (Salmonella agona (strain SL483)).